Here is a 282-residue protein sequence, read N- to C-terminus: D-alanine aminotransferase (282 aa).

Y32 contributes to the substrate binding site. R51 contacts pyridoxal 5'-phosphate. Substrate is bound by residues R99 and H101. K146 serves as the catalytic Proton acceptor. Residue K146 is modified to N6-(pyridoxal phosphate)lysine. Pyridoxal 5'-phosphate is bound at residue E178.

It belongs to the class-IV pyridoxal-phosphate-dependent aminotransferase family. As to quaternary structure, homodimer. Pyridoxal 5'-phosphate is required as a cofactor.

It catalyses the reaction D-alanine + 2-oxoglutarate = D-glutamate + pyruvate. Its function is as follows. Acts on the D-isomers of alanine, leucine, aspartate, glutamate, aminobutyrate, norvaline and asparagine. The enzyme transfers an amino group from a substrate D-amino acid to the pyridoxal phosphate cofactor to form pyridoxamine and an alpha-keto acid in the first half-reaction. The second half-reaction is the reverse of the first, transferring the amino group from the pyridoxamine to a second alpha-keto acid to form the product D-amino acid via a ping-pong mechanism. This is an important process in the formation of D-alanine and D-glutamate, which are essential bacterial cell wall components. The chain is D-alanine aminotransferase (dat) from Staphylococcus aureus (strain N315).